The chain runs to 493 residues: Probable polyol transporter 6 (493 aa).

A run of 12 helical transmembrane segments spans residues 25 to 45 (SIVSIIFGYDTGVMSGAMVFI), 54 to 74 (VQIEVLTGILNLCALVGSLLA), 85 to 105 (YTIVLASILFMLGSILMGWGP), 116 to 136 (TAGLGVGFALMVAPVYSAEIA), 142 to 162 (GLLASLPHLCISIGILLGYIV), 177 to 197 (LMLGIAAVPSLVLAFGILKMP), 275 to 295 (VLLTALGIHFFQHASGIEAVL), 313 to 333 (LFLVTIGVGIMKTTFIFTATL), 343 to 363 (LLLTSVGGMVIALTMLGFGLT), 372 to 392 (LAWALVLSIVAAYSFVAFFSI), 414 to 434 (GASLGVAVNRVMNATVSMSFL), and 444 to 464 (GAFFMFAGVAAVAWNFFFFLL).

This sequence belongs to the major facilitator superfamily. Sugar transporter (TC 2.A.1.1) family.

The protein localises to the membrane. Its function is as follows. Plasma membrane sugar-proton symporter. This chain is Probable polyol transporter 6 (PLT6), found in Arabidopsis thaliana (Mouse-ear cress).